The primary structure comprises 405 residues: Mitochondrial outer membrane protein SLC25A46 (405 aa).

The segment at Met-1 to Pro-77 is disordered. A compositionally biased stretch (low complexity) spans Phe-22–Ser-37. A Solcar 1 repeat occupies Gln-80 to Pro-171. Transmembrane regions (helical) follow at residues Phe-87 to Phe-107, Phe-151 to Pro-171, Val-183 to Ala-203, Leu-242 to Ile-262, Phe-302 to Leu-322, and Met-371 to Leu-391. A Solcar 2 repeat occupies Asp-299–Leu-401.

This sequence belongs to the mitochondrial carrier (TC 2.A.29) family.

Its subcellular location is the mitochondrion outer membrane. Transmembrane protein of the mitochondrial outer membrane that controls mitochondrial organization. May regulate the biogenesis and dynamics of mitochondrial cristae, the inwards folds of the inner mitochondrial membrane. Could regulate mitochondrial lipid homeostasis and thereby mitochondrial fission. The protein is Mitochondrial outer membrane protein SLC25A46 (slc25a46) of Danio rerio (Zebrafish).